Consider the following 241-residue polypeptide: Small ribosomal subunit protein uS2 (241 aa).

Belongs to the universal ribosomal protein uS2 family.

This chain is Small ribosomal subunit protein uS2, found in Pectobacterium atrosepticum (strain SCRI 1043 / ATCC BAA-672) (Erwinia carotovora subsp. atroseptica).